Reading from the N-terminus, the 1517-residue chain is DNA-directed RNA polymerase subunit beta' (1517 aa).

Zn(2+) contacts are provided by cysteine 71, cysteine 73, cysteine 86, and cysteine 89. Aspartate 482, aspartate 484, and aspartate 486 together coordinate Mg(2+). Cysteine 812, cysteine 886, cysteine 893, and cysteine 896 together coordinate Zn(2+).

It belongs to the RNA polymerase beta' chain family. In terms of assembly, the RNAP catalytic core consists of 2 alpha, 1 beta, 1 beta' and 1 omega subunit. When a sigma factor is associated with the core the holoenzyme is formed, which can initiate transcription. The cofactor is Mg(2+). Zn(2+) is required as a cofactor.

It catalyses the reaction RNA(n) + a ribonucleoside 5'-triphosphate = RNA(n+1) + diphosphate. In terms of biological role, DNA-dependent RNA polymerase catalyzes the transcription of DNA into RNA using the four ribonucleoside triphosphates as substrates. The polypeptide is DNA-directed RNA polymerase subunit beta' (Campylobacter jejuni subsp. jejuni serotype O:2 (strain ATCC 700819 / NCTC 11168)).